The primary structure comprises 150 residues: Large ribosomal subunit protein bL9 (150 aa).

The protein belongs to the bacterial ribosomal protein bL9 family.

In terms of biological role, binds to the 23S rRNA. This chain is Large ribosomal subunit protein bL9, found in Streptococcus sanguinis (strain SK36).